The sequence spans 122 residues: Basic phospholipase A2 LmTX-II (122 aa).

6 disulfide bridges follow: Cys-26–Cys-115, Cys-28–Cys-44, Cys-43–Cys-95, Cys-49–Cys-122, Cys-50–Cys-88, and Cys-75–Cys-86. The Ca(2+) site is built by Tyr-27, Gly-29, and Gly-31. The active site involves His-47. Asp-48 serves as a coordination point for Ca(2+). Asp-89 is an active-site residue.

In terms of assembly, monomer. Requires Ca(2+) as cofactor. Expressed by the venom gland.

It is found in the secreted. The enzyme catalyses a 1,2-diacyl-sn-glycero-3-phosphocholine + H2O = a 1-acyl-sn-glycero-3-phosphocholine + a fatty acid + H(+). Functionally, snake venom phospholipase A2 (PLA2) that may display neurotoxic and myotoxic activities. May induce inflammatory edema by mechanisms involving mast cell activation and arachidonic acid metabolites. May increase plasma creatine kinase activity. PLA2 catalyzes the calcium-dependent hydrolysis of the 2-acyl groups in 3-sn-phosphoglycerides. The polypeptide is Basic phospholipase A2 LmTX-II (Lachesis muta muta (Bushmaster)).